Reading from the N-terminus, the 737-residue chain is Genome polyprotein (737 aa).

S2 is modified (N-acetylserine; by host). The interaction with STAT1 stretch occupies residues 2–23; the sequence is STNPKPQRKTKRNTNRRPQDVK. Residues 2 to 58 are interaction with EIF2AK2/PKR; sequence STNPKPQRKTKRNTNRRPQDVKFPGGGQIVGGVYLLPRRGPRLGVRATRKTSERSQP. An interaction with DDX3X region spans residues 2–59; sequence STNPKPQRKTKRNTNRRPQDVKFPGGGQIVGGVYLLPRRGPRLGVRATRKTSERSQPR. Residues 2-75 form a disordered region; the sequence is STNPKPQRKT…PKDRRSTGKS (74 aa). Residues 2 to 168 are Cytoplasmic-facing; that stretch reads STNPKPQRKT…EDGVNYATGN (167 aa). 2 consecutive short sequence motifs (nuclear localization signal) follow at residues 5-13 and 38-43; these read PKPQRKTKR and PRRGPR. Residues 7–16 show a composition bias toward basic residues; sequence PQRKTKRNTN. The segment covering 32–47 has biased composition (low complexity); sequence GGVYLLPRRGPRLGVR. A Phosphoserine; by host modification is found at S53. 2 consecutive short sequence motifs (nuclear localization signal) follow at residues 58–64 and 66–71; these read PRGRRQP and PKDRRS. Phosphoserine; by host occurs at positions 99 and 116. The segment at 112–152 is important for endoplasmic reticulum and mitochondrial localization; that stretch reads PRHRSRNVGKVIDTLTCGFADLMGYIPVVGAPLGGVARALA. An interaction with APOA2 region spans residues 122–173; that stretch reads VIDTLTCGFADLMGYIPVVGAPLGGVARALAHGVRVLEDGVNYATGNLPGCS. The tract at residues 164–167 is important for lipid droplets localization; that stretch reads YATG. Residues 169–189 traverse the membrane as a helical segment; sequence LPGCSFSIFLLALLSCITVPV. Residues 178–191 constitute a propeptide, ER anchor for the core protein, removed in mature form by host signal peptidase; sequence LLALLSCITVPVSA. The Lumenal portion of the chain corresponds to 190 to 358; the sequence is SAVQVKNTSN…SGAHWGVMFG (169 aa). N196, N209, and N234 each carry an N-linked (GlcNAc...) asparagine; by host glycan. The important for fusion stretch occupies residues 265-296; that stretch reads VVVSATLCSALYVGDLCGGVMLAAQMFIVSPQ. N305 is a glycosylation site (N-linked (GlcNAc...) asparagine; by host). A helical membrane pass occupies residues 359–379; the sequence is LAYFSMQGAWAKVVVILLLAA. Topologically, residues 380 to 729 are lumenal; it reads GVDANTRTVA…WEWVVLLFLL (350 aa). Residues 385–411 form an HVR1 region; it reads TRTVAGSAAATTRGFTSMFSSGSKQNL. N-linked (GlcNAc...) (high mannose) asparagine; by host glycosylation is found at N417, N423, N430, and N448. Cystine bridges form between C429–C554, C452–C459, C488–C496, and C505–C510. The HVR2 stretch occupies residues 474–481; the sequence is YEDNVTNP. The segment at 482–495 is CD81-binding 1; it reads EDMRPYCWHYPPKP. N-linked (GlcNAc...) asparagine; by host glycosylation is present at N542. Residues 546–553 form a CD81-binding 2 region; sequence PPRGSWFG. N558 is a glycosylation site (N-linked (GlcNAc...) (high mannose) asparagine; by host). Intrachain disulfides connect C566-C571, C585-C589, C601-C624, and C611-C648. N-linked (GlcNAc...) (high mannose) asparagine; by host glycans are attached at residues N627 and N649. A disulfide bridge connects residues C656 and C681. The segment at 664–675 is PKR/eIF2-alpha phosphorylation homology domain (PePHD); that stretch reads SQLSPLLHSTTE. The chain crosses the membrane as a helical span at residues 730-737; it reads LADARVCA.

Belongs to the hepacivirus polyprotein family. In terms of assembly, homooligomer. Interacts with E1 (via C-terminus). Interacts with the non-structural protein 5A. Interacts (via N-terminus) with host STAT1 (via SH2 domain); this interaction results in decreased STAT1 phosphorylation and ubiquitin-mediated proteasome-dependent STAT1 degradation, leading to decreased IFN-stimulated gene transcription. Interacts with host STAT3; this interaction constitutively activates STAT3. Interacts with host LTBR receptor. Interacts with host TNFRSF1A receptor and possibly induces apoptosis. Interacts with host HNRPK. Interacts with host YWHAE. Interacts with host UBE3A/E6AP. Interacts with host DDX3X. Interacts with host APOA2. Interacts with host RXRA protein. Interacts with host SP110 isoform 3/Sp110b; this interaction sequesters the transcriptional corepressor SP110 away from the nucleus. Interacts with host CREB3 nuclear transcription protein; this interaction triggers cell transformation. Interacts with host ACY3. Interacts with host C1QR1. Interacts with host RBM24; this interaction, which enhances the interaction of the mature core protein with 5'-UTR, may inhibit viral translation and favor replication. Interacts with host EIF2AK2/PKR; this interaction induces the autophosphorylation of EIF2AK2. Part of the viral assembly initiation complex composed of NS2, E1, E2, NS3, NS4A, NS5A and the mature core protein. Forms a heterodimer with envelope glycoprotein E2. Interacts with mature core protein. Interacts with protease NS2. The heterodimer E1/E2 interacts with host CLDN1; this interaction plays a role in viral entry into host cell. Interacts with host SPSB2 (via C-terminus). Part of the viral assembly initiation complex composed of NS2, E1, E2, NS3, NS4A, NS5A and the mature core protein. As to quaternary structure, forms a heterodimer with envelope glycoprotein E1. Interacts with host CD81 and SCARB1 receptors; these interactions play a role in viral entry into host cell. Interacts with host EIF2AK2/PKR; this interaction inhibits EIF2AK2 and probably allows the virus to evade the innate immune response. Interacts with host CD209/DC-SIGN and CLEC4M/DC-SIGNR. Interact with host SPCS1; this interaction is essential for viral particle assembly. Interacts with protease NS2. The heterodimer E1/E2 interacts with host CLDN1; this interaction plays a role in viral entry into host cell. Part of the viral assembly initiation complex composed of NS2, E1, E2, NS3, NS4A, NS5A and the mature core protein. In terms of processing, specific enzymatic cleavages in vivo yield mature proteins. The structural proteins, core, E1, E2 and p7 are produced by proteolytic processing by host signal peptidases. The core protein precursor is synthesized as a 23 kDa, which is retained in the ER membrane through the hydrophobic signal peptide. Cleavage by the signal peptidase releases the 21 kDa mature core protein. The cleavage of the core protein precursor occurs between aminoacids 176 and 188 but the exact cleavage site is not known. Some degraded forms of the core protein appear as well during the course of infection. The other proteins (p7, NS2, NS3, NS4A, NS4B, NS5A and NS5B) are cleaved by the viral proteases. Autoprocessing between NS2 and NS3 is mediated by the NS2 cysteine protease catalytic domain and regulated by the NS3 N-terminal domain. Phosphorylated by host PKC and PKA. Post-translationally, ubiquitinated; mediated by UBE3A and leading to core protein subsequent proteasomal degradation. In terms of processing, highly N-glycosylated.

It is found in the host endoplasmic reticulum membrane. Its subcellular location is the host mitochondrion membrane. The protein resides in the virion. It localises to the host cytoplasm. The protein localises to the host nucleus. It is found in the host lipid droplet. Its subcellular location is the virion membrane. In terms of biological role, packages viral RNA to form a viral nucleocapsid, and promotes virion budding. Participates in the viral particle production as a result of its interaction with the non-structural protein 5A. Binds RNA and may function as a RNA chaperone to induce the RNA structural rearrangements taking place during virus replication. Modulates viral translation initiation by interacting with viral IRES and 40S ribosomal subunit. Affects various cell signaling pathways, host immunity and lipid metabolism. Prevents the establishment of cellular antiviral state by blocking the interferon-alpha/beta (IFN-alpha/beta) and IFN-gamma signaling pathways and by blocking the formation of phosphorylated STAT1 and promoting ubiquitin-mediated proteasome-dependent degradation of STAT1. Activates STAT3 leading to cellular transformation. Regulates the activity of cellular genes, including c-myc and c-fos. May repress the promoter of p53, and sequester CREB3 and SP110 isoform 3/Sp110b in the cytoplasm. Represses cell cycle negative regulating factor CDKN1A, thereby interrupting an important check point of normal cell cycle regulation. Targets transcription factors involved in the regulation of inflammatory responses and in the immune response: suppresses TNF-induced NF-kappa-B activation, and activates AP-1. Binds to dendritic cells (DCs) via C1QR1, resulting in down-regulation of T-lymphocytes proliferation. Alters lipid metabolism by interacting with hepatocellular proteins involved in lipid accumulation and storage. Induces up-regulation of FAS promoter activity, and thereby contributes to the increased triglyceride accumulation in hepatocytes (steatosis). Its function is as follows. Forms a heterodimer with envelope glycoprotein E2, which mediates virus attachment to the host cell, virion internalization through clathrin-dependent endocytosis and fusion with host membrane. Fusion with the host cell is most likely mediated by both E1 and E2, through conformational rearrangements of the heterodimer required for fusion rather than a classical class II fusion mechanism. E1/E2 heterodimer binds host apolipoproteins such as APOB and ApoE thereby forming a lipo-viro-particle (LVP). APOE associated to the LVP allows the initial virus attachment to cell surface receptors such as the heparan sulfate proteoglycans (HSPGs), syndecan-1 (SDC1), syndecan-1 (SDC2), the low-density lipoprotein receptor (LDLR) and scavenger receptor class B type I (SCARB1). The cholesterol transfer activity of SCARB1 allows E2 exposure and binding of E2 to SCARB1 and the tetraspanin CD81. E1/E2 heterodimer binding on CD81 activates the epithelial growth factor receptor (EGFR) signaling pathway. Diffusion of the complex E1-E2-EGFR-SCARB1-CD81 to the cell lateral membrane allows further interaction with Claudin 1 (CLDN1) and occludin (OCLN) to finally trigger HCV entry. Forms a heterodimer with envelope glycoprotein E1, which mediates virus attachment to the host cell, virion internalization through clathrin-dependent endocytosis and fusion with host membrane. Fusion with the host cell is most likely mediated by both E1 and E2, through conformational rearrangements of the heterodimer required for fusion rather than a classical class II fusion mechanism. The interaction between envelope glycoprotein E2 and host apolipoprotein E/APOE allows the proper assembly, maturation and infectivity of the viral particles. This interaction is probably promoted via the up-regulation of cellular autophagy by the virus. E1/E2 heterodimer binds host apolipoproteins such as APOB and APOE thereby forming a lipo-viro-particle (LVP). APOE associated to the LVP allows the initial virus attachment to cell surface receptors such as the heparan sulfate proteoglycans (HSPGs), syndecan-1 (SDC1), syndecan-1 (SDC2), the low-density lipoprotein receptor (LDLR) and scavenger receptor class B type I (SCARB1). The cholesterol transfer activity of SCARB1 allows E2 exposure and binding of E2 to SCARB1 and the tetraspanin CD81. E1/E2 heterodimer binding on CD81 activates the epithelial growth factor receptor (EGFR) signaling pathway. Diffusion of the complex E1-E2-EGFR-SCARB1-CD81 to the cell lateral membrane allows further interaction with Claudin 1 (CLDN1) and occludin (OCLN) to finally trigger HCV entry. Inhibits host EIF2AK2/PKR activation, preventing the establishment of an antiviral state. Viral ligand for CD209/DC-SIGN and CLEC4M/DC-SIGNR, which are respectively found on dendritic cells (DCs), and on liver sinusoidal endothelial cells and macrophage-like cells of lymph node sinuses. These interactions allow the capture of circulating HCV particles by these cells and subsequent facilitated transmission to permissive cells such as hepatocytes and lymphocyte subpopulations. The protein is Genome polyprotein of Homo sapiens (Human).